Reading from the N-terminus, the 278-residue chain is Undecaprenyl-diphosphatase 1 (278 aa).

The next 6 helical transmembrane spans lie at 45-65 (AVIG…LVYF), 95-115 (WWVI…KPLI), 119-139 (LASL…MWWA), 191-211 (VAAT…AGLY), 225-245 (PLAV…AWLL), and 256-276 (FVVY…TGVL).

This sequence belongs to the UppP family.

The protein localises to the cell membrane. It carries out the reaction di-trans,octa-cis-undecaprenyl diphosphate + H2O = di-trans,octa-cis-undecaprenyl phosphate + phosphate + H(+). In terms of biological role, catalyzes the dephosphorylation of undecaprenyl diphosphate (UPP). Confers resistance to bacitracin. In Streptomyces coelicolor (strain ATCC BAA-471 / A3(2) / M145), this protein is Undecaprenyl-diphosphatase 1.